Reading from the N-terminus, the 2512-residue chain is Isonitrile lipopeptide synthase (2512 aa).

Carrier domains follow at residues 935–1003 (AAGL…PTPD) and 1984–2059 (APAG…GRDA). Serine 963 and serine 2019 each carry O-(pantetheine 4'-phosphoryl)serine. In terms of domain architecture, Thioester reductase (TE) spans 2112 to 2372 (LTGATGFLGR…LPVTFVAEAI (261 aa)).

The protein belongs to the ATP-dependent AMP-binding enzyme family. Pantetheine 4'-phosphate serves as cofactor.

It catalyses the reaction 2 a (3R)-3-isocyanyl-fatty acyl-[ACP] + L-lysine + ATP + 2 NADPH = an isonitrile lipopeptide + 2 holo-[ACP] + AMP + diphosphate + 2 NADP(+). In terms of biological role, nonribosomal peptide synthetase (NRPS) involved in the biosynthesis of a unique class of isonitrile lipopeptides (INLPs) that seem to function as virulence factors in M.tuberculosis and to play a role in metal acquisition. Catalyzes the final step in the pathway, i.e. the condensation of a (3R)-3-isocyanyl-fatty acyl-[ACP] to both amino groups of a lysine, producing isonitrile lipopeptides. This is Isonitrile lipopeptide synthase from Mycobacterium tuberculosis (strain ATCC 25618 / H37Rv).